The chain runs to 159 residues: Putative transcriptional regulatory protein rrnAC0199 (159 aa).

This sequence belongs to the Tfx family.

In terms of biological role, putative transcriptional regulator. The protein is Putative transcriptional regulatory protein rrnAC0199 of Haloarcula marismortui (strain ATCC 43049 / DSM 3752 / JCM 8966 / VKM B-1809) (Halobacterium marismortui).